The primary structure comprises 162 residues: Interleukin-2 (162 aa).

The N-terminal stretch at 1-20 (MYKIQLLSCIALTLALVANG) is a signal peptide. The O-linked (GalNAc...) threonine glycan is linked to Thr-23. Residue Asn-70 is glycosylated (N-linked (GlcNAc...) asparagine). Cysteines 79 and 134 form a disulfide.

Belongs to the IL-2 family.

It localises to the secreted. Cytokine produced by activated CD4-positive helper T-cells and to a lesser extend activated CD8-positive T-cells and natural killer (NK) cells that plays pivotal roles in the immune response and tolerance. Binds to a receptor complex composed of either the high-affinity trimeric IL-2R (IL2RA/CD25, IL2RB/CD122 and IL2RG/CD132) or the low-affinity dimeric IL-2R (IL2RB and IL2RG). Interaction with the receptor leads to oligomerization and conformation changes in the IL-2R subunits resulting in downstream signaling starting with phosphorylation of JAK1 and JAK3. In turn, JAK1 and JAK3 phosphorylate the receptor to form a docking site leading to the phosphorylation of several substrates including STAT5. This process leads to activation of several pathways including STAT, phosphoinositide-3-kinase/PI3K and mitogen-activated protein kinase/MAPK pathways. Functions as a T-cell growth factor and can increase NK-cell cytolytic activity as well. Promotes strong proliferation of activated B-cells and subsequently immunoglobulin production. Plays a pivotal role in regulating the adaptive immune system by controlling the survival and proliferation of regulatory T-cells, which are required for the maintenance of immune tolerance. Moreover, participates in the differentiation and homeostasis of effector T-cell subsets, including Th1, Th2, Th17 as well as memory CD8-positive T-cells. In Cervus elaphus (Red deer), this protein is Interleukin-2 (IL2).